The following is a 753-amino-acid chain: Small G protein signaling modulator 3 homolog (753 aa).

Residues glycine 115–glycine 306 form the Rab-GAP TBC domain. Residues serine 482–glutamate 541 form the SH3 domain. One can recognise an RUN domain in the interval glycine 557–glutamate 720.

The protein belongs to the small G protein signaling modulator family.

In Xenopus laevis (African clawed frog), this protein is Small G protein signaling modulator 3 homolog (sgsm3).